The chain runs to 336 residues: MTDRAMSYPRILADVGGTNVRFAMETAPMRIGEITAYKVAEHASLEAAMRLYMLTRSGAARPRHAAIGLANPVTGDQVKLTNHNWAFSVEAMRRALDLDTLVAINDFTSLALALPYLPDASLVQVRDGTAVATAPRALIGPGTGLGVSGLIPAPGGAVALAGEGGHIEIMPVTDDEWIAWRAAHDQFGRVSAERLLSGMGLSHIHAALSAEMGTPLEVPLAPAQVTDGAMRAGDPVCRRAFDAFCGMLGSVAADVALVLGARGGVYLGGGIVPRFVDALRASTFAERFVAKGRMGSFLADVPVYVITAEYPALPGLARALADRLEADARRAETSQS.

13-18 (ADVGGT) is a binding site for ATP.

Belongs to the bacterial glucokinase family.

The protein resides in the cytoplasm. The enzyme catalyses D-glucose + ATP = D-glucose 6-phosphate + ADP + H(+). This chain is Glucokinase, found in Cupriavidus metallidurans (strain ATCC 43123 / DSM 2839 / NBRC 102507 / CH34) (Ralstonia metallidurans).